The chain runs to 248 residues: MQTCPLAFPGHVSQALGTLLFLAASLSAQNEGWDSPICTEGVVSVSWGENTVMSCNISNAFSHVNIKLRAHGQESAIFNEVAPGYFSRDGWQLQVQGGVAQLVIKGARDSHAGLYMWHLVGHQRNNRQVTLEVSGAEPQSAPDTGFWPVPAVVTAVFILLVALVMFAWYRCRCSQQRREKKFFLLEPQMKVAALRAGAQQGLSRASAELWTPDSEPTPRPLALVFKPSPLGALELLSPQPLFPYAADP.

Residues 1–28 form the signal peptide; the sequence is MQTCPLAFPGHVSQALGTLLFLAASLSA. Over 29–145 the chain is Extracellular; sequence QNEGWDSPIC…AEPQSAPDTG (117 aa). An intrachain disulfide couples C38 to C55. N56 is a glycosylation site (N-linked (GlcNAc...) asparagine). A helical transmembrane segment spans residues 146 to 166; it reads FWPVPAVVTAVFILLVALVMF. At 167–248 the chain is on the cytoplasmic side; the sequence is AWYRCRCSQQ…QPLFPYAADP (82 aa).

Belongs to the SECTM family. In terms of assembly, interacts with CD7. In terms of tissue distribution, detected at the highest levels in peripheral blood leukocytes and breast cancer cell lines. Found in leukocytes of the myeloid lineage, with the strongest expression observed in granulocytes and no detectable expression in lymphocytes. Expressed in thymic epithelial cells and fibroblasts.

The protein resides in the cell membrane. The protein localises to the secreted. May be involved in thymocyte signaling. The chain is Secreted and transmembrane protein 1 (SECTM1) from Homo sapiens (Human).